Here is a 577-residue protein sequence, read N- to C-terminus: MPDRTEKHSTMPDSPVDVKTQSRLTPPAMPPPPTTQGAPRTSSFTPTTLTNGTSHSPTALNGAPSPPNGFSNGPSSSSSSSLANQQLPPACGARQLSKLKRFLTTLQQFGNDISPEIGERVRTLVLGLVNSTLTIEEFHSKLQEATNFPLRPFVIPFLKANLPLLQRELLHCARLAKQNPAQYLAQHEQLLLDASTTSPVDSSELLLDVNENGKRRTPDRTKENGFDREPLHSEHPSKRPCTISPGQRYSPNNGLSYQPNGLPHPTPPPPQHYRLDDMAIAHHYRDSYRHPSHRDLRDRNRPMGLHGTRQEEMIDHRLTDREWAEEWKHLDHLLNCIMDMVEKTRRSLTVLRRCQEADREELNYWIRRYSDAEDLKKGGSSSSSHSRQQSPVNPDPVALDAHREFLHRPASGYVPEEIWKKAEEAVNEVKRQAMTELQKAVSEAERKAHDMITTERAKMERTVAEAKRQAAEDALAVINQQEDSSESCWNCGRKASETCSGCNTARYCGSFCQHKDWEKHHHICGQTLQAPQQGDTPAVSSSVTPSSGAGSPMDTPPAATPRSTTPGTPSTIETTPR.

The span at Met1–Thr10 shows a compositional bias: basic and acidic residues. A disordered region spans residues Met1–Leu87. Residue Ser14 is modified to Phosphoserine. Polar residues predominate over residues Ser42 to Ala59. The span at Asn68–Leu87 shows a compositional bias: low complexity. In terms of domain architecture, TAFH spans Ala93–Glu188. The segment at Ser203–Gln271 is disordered. The segment covering Glu211 to Ser237 has biased composition (basic and acidic residues). The span at Ser244–Gln258 shows a compositional bias: polar residues. The span at Leu262 to Gln271 shows a compositional bias: pro residues. An important for oligomerization region spans residues Gln310–Glu356. Residues Gln310–Glu356 form a nervy homology region 2 (NHR2) region. Residues Asp374–Pro396 form a disordered region. A compositionally biased stretch (low complexity) spans Ser380–Ser390. Ser390 carries the post-translational modification Phosphoserine. The interval Glu416 to Glu465 is nervy homology region 3 (NHR3). Positions 488, 491, 499, 502, 508, 512, 520, and 524 each coordinate Zn(2+). The segment at Cys488–Cys524 adopts an MYND-type zinc-finger fold. Residues Gln529–Arg577 form a disordered region. Low complexity-rich tracts occupy residues Thr536–Met553 and Thr560–Arg577.

This sequence belongs to the CBFA2T family. Homotetramer. Heterotetramer with CBFA2T2 and CBFA2T3. Interacts with TCF12, SIN3A, HDAC1, HDAC2, HDAC3, NCOR1 and NCOR2. Interacts with ATN1 (via its N-terminus); the interaction enhances the transcriptional repression.

Its subcellular location is the nucleus. Its function is as follows. Transcriptional corepressor which facilitates transcriptional repression via its association with DNA-binding transcription factors and recruitment of other corepressors and histone-modifying enzymes. Can repress the expression of MMP7 in a ZBTB33-dependent manner. Can repress transactivation mediated by TCF12. Acts as a negative regulator of adipogenesis. The sequence is that of Protein CBFA2T1 (Runx1t1) from Mus musculus (Mouse).